A 238-amino-acid chain; its full sequence is Ribonuclease PH (238 aa).

Residues arginine 86 and 124–126 (GTR) each bind phosphate.

The protein belongs to the RNase PH family. Homohexameric ring arranged as a trimer of dimers.

The catalysed reaction is tRNA(n+1) + phosphate = tRNA(n) + a ribonucleoside 5'-diphosphate. Functionally, phosphorolytic 3'-5' exoribonuclease that plays an important role in tRNA 3'-end maturation. Removes nucleotide residues following the 3'-CCA terminus of tRNAs; can also add nucleotides to the ends of RNA molecules by using nucleoside diphosphates as substrates, but this may not be physiologically important. Probably plays a role in initiation of 16S rRNA degradation (leading to ribosome degradation) during starvation. The polypeptide is Ribonuclease PH (Aliivibrio salmonicida (strain LFI1238) (Vibrio salmonicida (strain LFI1238))).